A 232-amino-acid chain; its full sequence is MNPNKIIDLKIITVGNYGVGKSSILKRFHQVDLDDNTTGFKTKKFIIDNHHVSVQTWDTSGQERFCSLSSSFYRNCDGVILCFSVDNEDSFKALDLWRDELIKFGYFPDRVPFILVGNKFDLEFKKHVINSKMAQDWCKYQKLKYQVGVNKELPDIIYHETSIEKLVSIDEAFINICRQAFENKIKISLSKLNNNNNNNEENNNNNNNNENNNYNNVPIFQIGQKIRSCCYY.

15–22 serves as a coordination point for GTP; it reads GNYGVGKS. Residues 35 to 40 carry the Effector region motif; the sequence is DNTTGF. GTP-binding positions include 58-62 and 118-121; these read DTSGQ and NKFD. Residues Cys-229 and Cys-230 are each lipidated (S-geranylgeranyl cysteine).

Belongs to the small GTPase superfamily. Rab family.

The protein localises to the cell membrane. The chain is Ras-related protein RabP (rabP) from Dictyostelium discoideum (Social amoeba).